A 245-amino-acid polypeptide reads, in one-letter code: tRNA pseudouridine synthase A (245 aa).

Aspartate 52 functions as the Nucleophile in the catalytic mechanism. A substrate-binding site is contributed by tyrosine 111.

It belongs to the tRNA pseudouridine synthase TruA family. Homodimer.

The catalysed reaction is uridine(38/39/40) in tRNA = pseudouridine(38/39/40) in tRNA. In terms of biological role, formation of pseudouridine at positions 38, 39 and 40 in the anticodon stem and loop of transfer RNAs. This Thermotoga maritima (strain ATCC 43589 / DSM 3109 / JCM 10099 / NBRC 100826 / MSB8) protein is tRNA pseudouridine synthase A.